Consider the following 40-residue polypeptide: Photosystem II reaction center protein J (40 aa).

Residues 8–28 (IPLWIIGTVTGILVIGLIGIF) form a helical membrane-spanning segment.

The protein belongs to the PsbJ family. As to quaternary structure, PSII is composed of 1 copy each of membrane proteins PsbA, PsbB, PsbC, PsbD, PsbE, PsbF, PsbH, PsbI, PsbJ, PsbK, PsbL, PsbM, PsbT, PsbX, PsbY, PsbZ, Psb30/Ycf12, at least 3 peripheral proteins of the oxygen-evolving complex and a large number of cofactors. It forms dimeric complexes.

It is found in the plastid. The protein localises to the chloroplast thylakoid membrane. One of the components of the core complex of photosystem II (PSII). PSII is a light-driven water:plastoquinone oxidoreductase that uses light energy to abstract electrons from H(2)O, generating O(2) and a proton gradient subsequently used for ATP formation. It consists of a core antenna complex that captures photons, and an electron transfer chain that converts photonic excitation into a charge separation. This chain is Photosystem II reaction center protein J, found in Eucalyptus globulus subsp. globulus (Tasmanian blue gum).